A 176-amino-acid polypeptide reads, in one-letter code: Ribosome rescue factor SmrB (176 aa).

In terms of domain architecture, Smr spans leucine 93–aspartate 168.

Belongs to the SmrB family. Associates with collided ribosomes, but not with correctly translating polysomes.

Acts as a ribosome collision sensor. Detects stalled/collided disomes (pairs of ribosomes where the leading ribosome is stalled and a second ribosome has collided with it) and endonucleolytically cleaves mRNA at the 5' boundary of the stalled ribosome. Stalled/collided disomes form a new interface (primarily via the 30S subunits) that binds SmrB. Cleaved mRNA becomes available for tmRNA ligation, leading to ribosomal subunit dissociation and rescue of stalled ribosomes. This Shewanella baltica (strain OS223) protein is Ribosome rescue factor SmrB.